The primary structure comprises 37 residues: Large ribosomal subunit protein bL36 (37 aa).

Belongs to the bacterial ribosomal protein bL36 family.

This is Large ribosomal subunit protein bL36 from Mycoplasma genitalium (strain ATCC 33530 / DSM 19775 / NCTC 10195 / G37) (Mycoplasmoides genitalium).